The sequence spans 333 residues: Cytochrome f (333 aa).

A signal peptide spans 1–44; the sequence is MRNASVTARLTRSVRAIVKTLLIAIATVTFYFSCDLALPQSAAA. Positions 45, 66, 69, and 70 each coordinate heme. The helical transmembrane segment at 301–318 threads the bilayer; that stretch reads GLIAFVALVMLAQVMLVL.

This sequence belongs to the cytochrome f family. In terms of assembly, the 4 large subunits of the cytochrome b6-f complex are cytochrome b6, subunit IV (17 kDa polypeptide, PetD), cytochrome f and the Rieske protein, while the 4 small subunits are PetG, PetL, PetM and PetN. The complex functions as a dimer. Heme serves as cofactor.

It localises to the cellular thylakoid membrane. In terms of biological role, component of the cytochrome b6-f complex, which mediates electron transfer between photosystem II (PSII) and photosystem I (PSI), cyclic electron flow around PSI, and state transitions. The protein is Cytochrome f (petA) of Desmonostoc sp. (strain PCC 7906) (Nostoc sp. (strain PCC 7906)).